Reading from the N-terminus, the 65-residue chain is Large ribosomal subunit protein bL35 (65 aa).

2 stretches are compositionally biased toward basic residues: residues 1 to 11 and 21 to 43; these read MPKIKTRRSAA and KFKRRRQNLRHILTKKAASRKMR. Residues 1 to 65 are disordered; it reads MPKIKTRRSA…KAVRRMLPNG (65 aa).

This sequence belongs to the bacterial ribosomal protein bL35 family.

This Desulfovibrio desulfuricans (strain ATCC 27774 / DSM 6949 / MB) protein is Large ribosomal subunit protein bL35.